The chain runs to 245 residues: Carboxy-S-adenosyl-L-methionine synthase (245 aa).

Residues Tyr42, 67 to 69 (GCS), 92 to 93 (DN), 120 to 121 (DI), Asn135, and Arg202 contribute to the S-adenosyl-L-methionine site.

The protein belongs to the class I-like SAM-binding methyltransferase superfamily. Cx-SAM synthase family. Homodimer.

The enzyme catalyses prephenate + S-adenosyl-L-methionine = carboxy-S-adenosyl-L-methionine + 3-phenylpyruvate + H2O. Its function is as follows. Catalyzes the conversion of S-adenosyl-L-methionine (SAM) to carboxy-S-adenosyl-L-methionine (Cx-SAM). This chain is Carboxy-S-adenosyl-L-methionine synthase, found in Vibrio parahaemolyticus serotype O3:K6 (strain RIMD 2210633).